The primary structure comprises 557 residues: 2-succinyl-5-enolpyruvyl-6-hydroxy-3-cyclohexene-1-carboxylate synthase (557 aa).

Belongs to the TPP enzyme family. MenD subfamily. Homodimer. It depends on Mg(2+) as a cofactor. Mn(2+) is required as a cofactor. Thiamine diphosphate serves as cofactor.

It carries out the reaction isochorismate + 2-oxoglutarate + H(+) = 5-enolpyruvoyl-6-hydroxy-2-succinyl-cyclohex-3-ene-1-carboxylate + CO2. It participates in quinol/quinone metabolism; 1,4-dihydroxy-2-naphthoate biosynthesis; 1,4-dihydroxy-2-naphthoate from chorismate: step 2/7. The protein operates within quinol/quinone metabolism; menaquinone biosynthesis. Functionally, catalyzes the thiamine diphosphate-dependent decarboxylation of 2-oxoglutarate and the subsequent addition of the resulting succinic semialdehyde-thiamine pyrophosphate anion to isochorismate to yield 2-succinyl-5-enolpyruvyl-6-hydroxy-3-cyclohexene-1-carboxylate (SEPHCHC). The chain is 2-succinyl-5-enolpyruvyl-6-hydroxy-3-cyclohexene-1-carboxylate synthase from Staphylococcus aureus (strain bovine RF122 / ET3-1).